The chain runs to 219 residues: RNA-3 uncharacterized 24.7 kDa protein (219 aa).

The protein is RNA-3 uncharacterized 24.7 kDa protein of Beta macrocarpa (Beet).